We begin with the raw amino-acid sequence, 1100 residues long: Protein P2-P3 (1100 aa).

The first 25 residues, 1–25 (MALLGIKLMTLVFAAWLSCCHSSSA), serve as a signal peptide directing secretion. 2 helical membrane-spanning segments follow: residues 131 to 151 (AVGMLLMIIIWIWSSIFLVVY) and 165 to 185 (AVCVGFLIFCTICAFRLISWI). The Peptidase S39 domain occupies 224–416 (VEGYKPFIIP…GLTSPDFKFE (193 aa)). Residues histidine 272, aspartate 304, and serine 373 each act as for protease activity in the active site. Disordered regions lie at residues 463 to 493 (EEESESDDERGKVVPPAKPSNYGEGCPPEHN) and 530 to 601 (VAPH…PQGE). The span at 530 to 542 (VAPHKEEKAEKGK) shows a compositional bias: basic and acidic residues. The span at 550-561 (GKNRKGTNHPMR) shows a compositional bias: basic residues. The span at 578–595 (SESHREISGRDPGRESND) shows a compositional bias: basic and acidic residues. A RdRp catalytic domain is found at 897 to 1012 (ELMVPTDCSG…SIDTTLAVYK (116 aa)).

The protein belongs to the ssRNA positive-strand viruses RNA-directed RNA polymerase family.

It is found in the host membrane. The catalysed reaction is RNA(n) + a ribonucleoside 5'-triphosphate = RNA(n+1) + diphosphate. Precursor from which the RNA-dependent RNA polymerase (RdRp) is probably released. RNA-dependent RNA polymerase plays an essential role in virus replication (Potential). Its function is as follows. RNA-dependent RNA polymerase replicates the viral genome. The sequence is that of Protein P2-P3 from Poinsettia latent virus (isolate Euphorbia pulcherrima/Germany/Siepen/2005) (PnLV).